A 474-amino-acid chain; its full sequence is Capsid vertex component 1 (474 aa).

This sequence belongs to the herpesviridae CVC1 protein family. As to quaternary structure, interacts (via C-terminus) with capsid vertex component 2/CVC2.

It is found in the virion. It localises to the host nucleus. Functionally, capsid vertex-specific component that plays a role during viral DNA encapsidation, assuring correct genome cleavage and presumably stabilizing capsids that contain full-length viral genomes. This Alcelaphine herpesvirus 1 (strain C500) (AlHV-1) protein is Capsid vertex component 1.